Reading from the N-terminus, the 925-residue chain is Alanine--tRNA ligase (925 aa).

Residues His611, His615, Cys714, and His718 each coordinate Zn(2+).

It belongs to the class-II aminoacyl-tRNA synthetase family. The cofactor is Zn(2+).

The protein resides in the cytoplasm. It catalyses the reaction tRNA(Ala) + L-alanine + ATP = L-alanyl-tRNA(Ala) + AMP + diphosphate. Catalyzes the attachment of alanine to tRNA(Ala) in a two-step reaction: alanine is first activated by ATP to form Ala-AMP and then transferred to the acceptor end of tRNA(Ala). Also edits incorrectly charged Ser-tRNA(Ala) and Gly-tRNA(Ala) via its editing domain. The protein is Alanine--tRNA ligase of Methanosarcina acetivorans (strain ATCC 35395 / DSM 2834 / JCM 12185 / C2A).